A 146-amino-acid polypeptide reads, in one-letter code: Large ribosomal subunit protein uL15 (146 aa).

Residues 1–13 (MKLHELKPAEGSR) show a composition bias toward basic and acidic residues. Residues 1-51 (MKLHELKPAEGSRKVRNRVGRGIGSGNGKTAGRGHKGQNARSGGGVRLGFE) are disordered. Gly residues-rich tracts occupy residues 21–31 (RGIGSGNGKTA) and 42–51 (SGGGVRLGFE).

It belongs to the universal ribosomal protein uL15 family. As to quaternary structure, part of the 50S ribosomal subunit.

Binds to the 23S rRNA. The polypeptide is Large ribosomal subunit protein uL15 (Bacillus mycoides (strain KBAB4) (Bacillus weihenstephanensis)).